A 130-amino-acid polypeptide reads, in one-letter code: Small ribosomal subunit protein uS8 (130 aa).

The protein belongs to the universal ribosomal protein uS8 family. As to quaternary structure, part of the 30S ribosomal subunit. Contacts proteins S5 and S12.

Functionally, one of the primary rRNA binding proteins, it binds directly to 16S rRNA central domain where it helps coordinate assembly of the platform of the 30S subunit. The chain is Small ribosomal subunit protein uS8 from Coxiella burnetii (strain RSA 331 / Henzerling II).